We begin with the raw amino-acid sequence, 122 residues long: Small ribosomal subunit protein uS13 (122 aa).

Residues 95 to 122 (GLPVRGQRTKTNSRTRKGRRKTVANKKK) are disordered. Over residues 101-122 (QRTKTNSRTRKGRRKTVANKKK) the composition is skewed to basic residues.

This sequence belongs to the universal ribosomal protein uS13 family. Part of the 30S ribosomal subunit. Forms a loose heterodimer with protein S19. Forms two bridges to the 50S subunit in the 70S ribosome.

Located at the top of the head of the 30S subunit, it contacts several helices of the 16S rRNA. In the 70S ribosome it contacts the 23S rRNA (bridge B1a) and protein L5 of the 50S subunit (bridge B1b), connecting the 2 subunits; these bridges are implicated in subunit movement. Contacts the tRNAs in the A and P-sites. This Protochlamydia amoebophila (strain UWE25) protein is Small ribosomal subunit protein uS13.